The sequence spans 225 residues: NAD(P)H-quinone oxidoreductase subunit K, chloroplastic (225 aa).

Cysteine 43, cysteine 44, cysteine 108, and cysteine 139 together coordinate [4Fe-4S] cluster.

The protein belongs to the complex I 20 kDa subunit family. As to quaternary structure, NDH is composed of at least 16 different subunits, 5 of which are encoded in the nucleus. It depends on [4Fe-4S] cluster as a cofactor.

It localises to the plastid. It is found in the chloroplast thylakoid membrane. The enzyme catalyses a plastoquinone + NADH + (n+1) H(+)(in) = a plastoquinol + NAD(+) + n H(+)(out). It catalyses the reaction a plastoquinone + NADPH + (n+1) H(+)(in) = a plastoquinol + NADP(+) + n H(+)(out). NDH shuttles electrons from NAD(P)H:plastoquinone, via FMN and iron-sulfur (Fe-S) centers, to quinones in the photosynthetic chain and possibly in a chloroplast respiratory chain. The immediate electron acceptor for the enzyme in this species is believed to be plastoquinone. Couples the redox reaction to proton translocation, and thus conserves the redox energy in a proton gradient. The chain is NAD(P)H-quinone oxidoreductase subunit K, chloroplastic from Solanum bulbocastanum (Wild potato).